Consider the following 184-residue polypeptide: MTHLTVYPDTDPATVLLDTRDGAEIAASLSGIGVVFERWDAPHALGEDADQTAVLAAYEADVKRLMDEGGYKSVDVVRVKPDNPNRAEMRQKFLAEHTHDDDEVRFFVEGAGAFYLRKDGRVYRVVCERNDLISVPAGTTHWFDTGAAPHFCAIRIFTSPEGWVGHFTGDDIATRFPKFESEPQ.

Fe(2+) is bound by residues His97, His99, Glu103, and His141. His97, His99, Glu103, and His141 together coordinate Ni(2+).

This sequence belongs to the acireductone dioxygenase (ARD) family. As to quaternary structure, monomer. Requires Fe(2+) as cofactor. It depends on Ni(2+) as a cofactor.

The enzyme catalyses 1,2-dihydroxy-5-(methylsulfanyl)pent-1-en-3-one + O2 = 3-(methylsulfanyl)propanoate + CO + formate + 2 H(+). It carries out the reaction 1,2-dihydroxy-5-(methylsulfanyl)pent-1-en-3-one + O2 = 4-methylsulfanyl-2-oxobutanoate + formate + 2 H(+). It functions in the pathway amino-acid biosynthesis; L-methionine biosynthesis via salvage pathway; L-methionine from S-methyl-5-thio-alpha-D-ribose 1-phosphate: step 5/6. Catalyzes 2 different reactions between oxygen and the acireductone 1,2-dihydroxy-3-keto-5-methylthiopentene (DHK-MTPene) depending upon the metal bound in the active site. Fe-containing acireductone dioxygenase (Fe-ARD) produces formate and 2-keto-4-methylthiobutyrate (KMTB), the alpha-ketoacid precursor of methionine in the methionine recycle pathway. Ni-containing acireductone dioxygenase (Ni-ARD) produces methylthiopropionate, carbon monoxide and formate, and does not lie on the methionine recycle pathway. This is Acireductone dioxygenase from Parvibaculum lavamentivorans (strain DS-1 / DSM 13023 / NCIMB 13966).